Consider the following 347-residue polypeptide: Spermatogenesis associated 6-like protein (347 aa).

The disordered stretch occupies residues 115–199 (SKSHGQRVQA…ENNLEHCSKK (85 aa)). Residues 116–125 (KSHGQRVQAT) show a composition bias toward polar residues. Positions 153-166 (LHLHRPTQRNHGKS) are enriched in basic residues. A compositionally biased stretch (basic and acidic residues) spans 170–183 (PGERKPPFVVRHVD). Residues Ser-218 and Ser-221 each carry the phosphoserine modification. The tract at residues 234 to 285 (ERIVLKSQPPPPVDSSESRKPSLSHQGDASLHTETSVTTSQLSRPPSPLNQP) is disordered. Polar residues predominate over residues 254–277 (PSLSHQGDASLHTETSVTTSQLSR).

It belongs to the SPATA6 family.

This Mus musculus (Mouse) protein is Spermatogenesis associated 6-like protein (Spata6l).